A 234-amino-acid polypeptide reads, in one-letter code: HTH-type transcriptional regulator ArcR (234 aa).

40-129 (VRHYTKGQVI…MAFLCKANDD (90 aa)) lines the a nucleoside 3',5'-cyclic phosphate pocket. Residues 155–228 (KFAKDRIIKL…HKNWLVSKHL (74 aa)) enclose the HTH crp-type domain. Residues 188–207 (IQLMSDMAGISRETAGHIIH) constitute a DNA-binding region (H-T-H motif).

It localises to the cytoplasm. Positively regulates the expression of the arcABDCR operon under anaerobic conditions, thus playing an essential role in arginine catabolism. May also control the expression of genes encoding proteins which are involved in anaerobic metabolism. Can bind cyclic AMP. In Staphylococcus aureus (strain USA300 / TCH1516), this protein is HTH-type transcriptional regulator ArcR (arcR).